A 312-amino-acid polypeptide reads, in one-letter code: Phospholipid phosphatase 3 (312 aa).

The Cytoplasmic segment spans residues 1–33 (MQSYKYDKAIVPESKNGGSPALNNNPRKGGSKR). Position 19 is a phosphoserine (serine 19). The helical transmembrane segment at 34 to 54 (VLLICLDLFCLFMAALPFLII) threads the bilayer. The Extracellular segment spans residues 55-85 (ETSTIKPYRRGFYCNDESIKYPLKVSETIND). Residues 86-106 (AVLCAVGIVIAILRIITGEFY) traverse the membrane as a helical segment. Over 107 to 123 (RIYYLKEKSRSTIQNPY) the chain is Cytoplasmic. The short motif at 109–110 (YY) is the Dityrosine basolateral targeting motif element. The chain crosses the membrane as a helical span at residues 124–144 (VAALYKQVGCFLFGCAISQSF). Residues 145-194 (TDIAKVSIGRLRPHFLSVCDPDFSQINCSEGYIQNYRCRGEDSKVQEARK) lie on the Extracellular side of the membrane. A phosphatase sequence motif I region spans residues 149 to 157 (KVSIGRLRP). Asparagine 171 carries an N-linked (GlcNAc...) asparagine glycan. An Integrin-binding motif motif is present at residues 183–185 (RGE). A helical transmembrane segment spans residues 195 to 215 (SFFSGHASFSMFTMLYLVLYL). A phosphatase sequence motif II region spans residues 197–200 (FSGH). The Proton donors role is filled by histidine 200. At 216-226 (QARFTWRGARL) the chain is on the cytoplasmic side. A helical membrane pass occupies residues 227 to 244 (LRPLLQFTLLMMAFYTGL). The segment at 245–256 (SRVSDYKHHPSD) is phosphatase sequence motif III. The Extracellular segment spans residues 245–258 (SRVSDYKHHPSDVL). Histidine 252 serves as the catalytic Nucleophile. Residues 259 to 279 (AGFAQGALVACCIVFFVSDLF) traverse the membrane as a helical segment. The interval 276-312 (SDLFKTKTTLSLPAPAIRREILSPVDIMDRSNHHNMV) is mediates interaction with CTNND1. At 280 to 312 (KTKTTLSLPAPAIRREILSPVDIMDRSNHHNMV) the chain is on the cytoplasmic side.

It belongs to the PA-phosphatase related phosphoesterase family. Forms functional homodimers and homooligomers that are not required for substrate recognition and catalytic activity. Can also form heterooligomers with other PLPP2 and PLPP3. Interacts with CTNND1; negatively regulates the PLPP3-mediated stabilization of beta-catenin/CTNNB1. In terms of processing, N-glycosylated. Contains high-mannose oligosaccharides. As to expression, detected in epithelial cells of intestinal mucosa, lung, liver and brain.

Its subcellular location is the cell membrane. The protein resides in the basolateral cell membrane. It is found in the endoplasmic reticulum membrane. The protein localises to the endoplasmic reticulum-Golgi intermediate compartment membrane. It localises to the golgi apparatus membrane. Its subcellular location is the golgi apparatus. The protein resides in the trans-Golgi network membrane. It is found in the membrane raft. The catalysed reaction is a 1,2-diacyl-sn-glycero-3-phosphate + H2O = a 1,2-diacyl-sn-glycerol + phosphate. It catalyses the reaction 1,2-dihexadecanoyl-sn-glycero-3-phosphate + H2O = 1,2-dihexadecanoyl-sn-glycerol + phosphate. The enzyme catalyses 1,2-di-(9Z-octadecenoyl)-sn-glycero-3-phosphate + H2O = 1,2-di-(9Z-octadecenoyl)-sn-glycerol + phosphate. It carries out the reaction a monoacyl-sn-glycero-3-phosphate + H2O = a monoacylglycerol + phosphate. The catalysed reaction is (9Z)-octadecenoyl-sn-glycero-3-phosphate + H2O = (9Z-octadecenoyl)-glycerol + phosphate. It catalyses the reaction sphing-4-enine 1-phosphate + H2O = sphing-4-enine + phosphate. The enzyme catalyses an N-acylsphing-4-enine 1-phosphate + H2O = an N-acylsphing-4-enine + phosphate. It carries out the reaction N-(octanoyl)-sphing-4-enine-1-phosphate + H2O = N-octanoylsphing-4-enine + phosphate. The catalysed reaction is N-(9Z-octadecenoyl)-ethanolamine phosphate + H2O = N-(9Z-octadecenoyl) ethanolamine + phosphate. It functions in the pathway lipid metabolism; phospholipid metabolism. Its activity is regulated as follows. Magnesium-independent phospholipid phosphatase. Insensitive to N-ethylmaleimide. Inhibited by sphingosine, zinc ions and modestly by propanolol. Functionally, magnesium-independent phospholipid phosphatase of the plasma membrane that catalyzes the dephosphorylation of a variety of glycerolipid and sphingolipid phosphate esters including phosphatidate/PA, lysophosphatidate/LPA, diacylglycerol pyrophosphate/DGPP, sphingosine 1-phosphate/S1P and ceramide 1-phosphate/C1P. Also acts on N-oleoyl ethanolamine phosphate/N-(9Z-octadecenoyl)-ethanolamine phosphate, a potential physiological compound. Has both an extracellular and an intracellular phosphatase activity, allowing the hydrolysis and the cellular uptake of these bioactive lipid mediators from the milieu, regulating signal transduction in different cellular processes. Through the dephosphorylation of extracellular sphingosine-1-phosphate and the regulation of its extra- and intracellular availability, plays a role in vascular homeostasis, regulating endothelial cell migration, adhesion, survival, proliferation and the production of pro-inflammatory cytokines. By maintaining the appropriate levels of this lipid in the cerebellum, also ensure its proper development and function. Through its intracellular lipid phosphatase activity may act in early compartments of the secretory pathway, regulating the formation of Golgi to endoplasmic reticulum retrograde transport carriers. Independently of this phosphatase activity may also function in the Wnt signaling pathway and the stabilization of beta-catenin/CTNNB1, thereby regulating cell proliferation, migration and differentiation in angiogenesis or yet in tumor growth. Also plays a role in integrin-mediated cell-cell adhesion in angiogenesis. The protein is Phospholipid phosphatase 3 of Rattus norvegicus (Rat).